A 212-amino-acid polypeptide reads, in one-letter code: Putative 3-methyladenine DNA glycosylase (212 aa).

This sequence belongs to the DNA glycosylase MPG family.

In Frankia casuarinae (strain DSM 45818 / CECT 9043 / HFP020203 / CcI3), this protein is Putative 3-methyladenine DNA glycosylase.